A 246-amino-acid polypeptide reads, in one-letter code: Ribonuclease PH (246 aa).

A disordered region spans residues 1-33 (MTPPKLPVREGRDALTPRPVSVQRGVNPHAPGS). Phosphate is bound by residues arginine 90 and 128–130 (GTR).

The protein belongs to the RNase PH family. Homohexameric ring arranged as a trimer of dimers.

It catalyses the reaction tRNA(n+1) + phosphate = tRNA(n) + a ribonucleoside 5'-diphosphate. Its function is as follows. Phosphorolytic 3'-5' exoribonuclease that plays an important role in tRNA 3'-end maturation. Removes nucleotide residues following the 3'-CCA terminus of tRNAs; can also add nucleotides to the ends of RNA molecules by using nucleoside diphosphates as substrates, but this may not be physiologically important. Probably plays a role in initiation of 16S rRNA degradation (leading to ribosome degradation) during starvation. This chain is Ribonuclease PH, found in Deinococcus radiodurans (strain ATCC 13939 / DSM 20539 / JCM 16871 / CCUG 27074 / LMG 4051 / NBRC 15346 / NCIMB 9279 / VKM B-1422 / R1).